A 327-amino-acid chain; its full sequence is Aspartate--ammonia ligase (327 aa).

It belongs to the class-II aminoacyl-tRNA synthetase family. AsnA subfamily.

It is found in the cytoplasm. It carries out the reaction L-aspartate + NH4(+) + ATP = L-asparagine + AMP + diphosphate + H(+). It participates in amino-acid biosynthesis; L-asparagine biosynthesis; L-asparagine from L-aspartate (ammonia route): step 1/1. This is Aspartate--ammonia ligase from Bacillus cereus (strain AH820).